Consider the following 23-residue polypeptide: M-poneritoxin-Nc1a (23 aa).

The protein belongs to the non-disulfide-bridged peptide (NDBP) superfamily. Medium-length antimicrobial peptide (group 3) family. Ponericin-W subfamily. In terms of tissue distribution, expressed by the venom gland.

The protein localises to the secreted. It is found in the target cell membrane. Its function is as follows. Membrane-perturbating peptide with multiple activities. It is insecticidal, since it induces contractile paralysis in insects (L.cuprina) during several hours, and death after 24 hours. It shows antibacterial activity with higher activity against Gram-positive than Gram-negative bacteria. It is also antiparasitic, since it potently inhibits the larval development of the major pathogenic nematode of ruminants (H.contortus, IC(50)=5.1 uM), but fails to reduce the motility of adult males of the other nematode B.malayi. It also shows cytotoxic activity against HEK293 cells (EC(50)=12-14 uM) and induces hemolysis in human erythrocytes (EC(50)=28.6-48.2 uM). In addition, it causes an important increase in intracellular calcium concentration on neuronal and epithelial cell lines, which supports a non-specific membrane perturbation mechanism of action. In vivo, it induces pain by intraplantar injection into mice, suggesting a defensive function against vertebrate predators. The protein is M-poneritoxin-Nc1a of Neoponera commutata (Large hunting ant).